Here is a 56-residue protein sequence, read N- to C-terminus: Ferredoxin (56 aa).

4Fe-4S ferredoxin-type domains follow at residues 2-28 (AYKILDTCVSCGACAAECPVDAISQGD) and 29-56 (TQFVIDADTCIDCGNCANVCPVGAPVQE). [4Fe-4S] cluster is bound by residues C9, C12, C15, C19, C38, C41, C44, and C48.

The cofactor is [4Fe-4S] cluster.

In terms of biological role, ferredoxins are iron-sulfur proteins that transfer electrons in a wide variety of metabolic reactions. The protein is Ferredoxin (fer) of Clostridium perfringens (strain 13 / Type A).